The chain runs to 285 residues: Diphthine methyl ester synthase (285 aa).

Residues L9, D84, G87, 112-113 (SI), L163, V221, and H246 each bind S-adenosyl-L-methionine.

It belongs to the diphthine synthase family.

It localises to the cytoplasm. The catalysed reaction is 2-[(3S)-amino-3-carboxypropyl]-L-histidyl-[translation elongation factor 2] + 4 S-adenosyl-L-methionine = diphthine methyl ester-[translation elongation factor 2] + 4 S-adenosyl-L-homocysteine + 3 H(+). It participates in protein modification; peptidyl-diphthamide biosynthesis. In terms of biological role, S-adenosyl-L-methionine-dependent methyltransferase that catalyzes four methylations of the modified target histidine residue in translation elongation factor 2 (EF-2), to form an intermediate called diphthine methyl ester. The four successive methylation reactions represent the second step of diphthamide biosynthesis. This is Diphthine methyl ester synthase (dph5) from Emericella nidulans (strain FGSC A4 / ATCC 38163 / CBS 112.46 / NRRL 194 / M139) (Aspergillus nidulans).